Reading from the N-terminus, the 394-residue chain is Methionine import ATP-binding protein MetN 2 (394 aa).

Residues 39–278 enclose the ABC transporter domain; the sequence is VSLEQVGKVF…PRHGATRALL (240 aa). ATP is bound at residue 75 to 82; sequence GRSGAGKS.

Belongs to the ABC transporter superfamily. Methionine importer (TC 3.A.1.24) family. In terms of assembly, the complex is composed of two ATP-binding proteins (MetN), two transmembrane proteins (MetI) and a solute-binding protein (MetQ).

Its subcellular location is the cell inner membrane. It catalyses the reaction L-methionine(out) + ATP + H2O = L-methionine(in) + ADP + phosphate + H(+). The enzyme catalyses D-methionine(out) + ATP + H2O = D-methionine(in) + ADP + phosphate + H(+). In terms of biological role, part of the ABC transporter complex MetNIQ involved in methionine import. Responsible for energy coupling to the transport system. This is Methionine import ATP-binding protein MetN 2 from Burkholderia cenocepacia (strain HI2424).